Consider the following 34-residue polypeptide: Dermaseptin-S2 (34 aa).

It belongs to the frog skin active peptide (FSAP) family. Dermaseptin subfamily. As to expression, expressed by the skin glands.

Its subcellular location is the secreted. Potent antimicrobial peptide with activity against bacteria and protozoa. Also has activity against fungi. Probably acts by disturbing membrane functions with its amphipathic structure. This chain is Dermaseptin-S2, found in Phyllomedusa sauvagei (Sauvage's leaf frog).